A 1085-amino-acid polypeptide reads, in one-letter code: Extracellular calcium-sensing receptor (1085 aa).

The first 19 residues, 1-19 (MALYSCCWILLAFSTWCTS), serve as a signal peptide directing secretion. At 20–611 (AYGPDQRAQK…KEIEFLSWTE (592 aa)) the chain is on the extracellular side. Residues 23 to 189 (PDQRAQKKGD…QFKSFLRTIP (167 aa)) form a ligand-binding 1 (LB1) region. C61 and C102 are joined by a disulfide. Position 67 to 71 (67 to 71 (RGFRW)) interacts with phosphate. The Ca(2+) site is built by I82, S85, L88, and L89. N91 is a glycosylation site (N-linked (GlcNAc...) asparagine). Residue T101 coordinates Ca(2+). N131 is a glycosylation site (N-linked (GlcNAc...) asparagine). T146 provides a ligand contact to Ca(2+). Residues S148, A169, and S171 each coordinate L-tryptophan. Ca(2+) contacts are provided by S171, P189, D191, E232, and D235. Residues 190-325 (NDEHQATAMA…GGTIGFGLKA (136 aa)) form a ligand-binding 2 (LB2) region. 7 disulfides stabilise this stretch: C237–C562, C359–C396, C438–C450, C543–C563, C547–C566, C569–C583, and C586–C599. Spermine is bound by residues D239 and S241. 2 N-linked (GlcNAc...) asparagine glycosylation sites follow: N262 and N288. E298 is a binding site for Ca(2+). E298 lines the L-tryptophan pocket. N401 carries an N-linked (GlcNAc...) asparagine glycan. A phosphate-binding site is contributed by 416–418 (RIS). N447, N469, and N489 each carry an N-linked (GlcNAc...) asparagine glycan. Y490 contacts Ca(2+). The N-linked (GlcNAc...) asparagine glycan is linked to N542. Residues 543–613 (CSRDCLAGTR…IEFLSWTEPF (71 aa)) are cysteine-rich (CR). G558 is a Ca(2+) binding site. N595 carries N-linked (GlcNAc...) asparagine glycosylation. The chain crosses the membrane as a helical span at residues 612-637 (PFGIALTLFAVLGIFLTAFVLGVFIK). Residues 638-649 (FRNTPIVKATNR) are Cytoplasmic-facing. The intracellular loop 1 (ICL1) stretch occupies residues 638 to 649 (FRNTPIVKATNR). The helical transmembrane segment at 650-669 (ELSYLLLFSLLCCFSSSLFF) threads the bilayer. Residues 670 to 675 (IGEPQD) are Extracellular-facing. The chain crosses the membrane as a helical span at residues 676–699 (WTCRLRQPAFGISFVLCISCILVK). Over 700 to 723 (TNRVLLVFEAKIPTSFHRKWWGLN) the chain is Cytoplasmic. The intracellular loop 2 (ICL2) stretch occupies residues 700-723 (TNRVLLVFEAKIPTSFHRKWWGLN). A helical membrane pass occupies residues 724-746 (LQFLLVFLCTFMQIVICAIWLNT). The Extracellular segment spans residues 747-770 (APPSSYRNHELEDEIIFITCHEGS). A helical membrane pass occupies residues 771–790 (LMALGFLIGYTCLLAAICFF). The Cytoplasmic portion of the chain corresponds to 791-806 (FAFKSRKLPENFNEAK). The interval 791-806 (FAFKSRKLPENFNEAK) is intracellular loop 3 (ICL3). A helical transmembrane segment spans residues 807-829 (FITFSMLIFFIVWISFIPAYAST). Residues 830–833 (YGKF) are Extracellular-facing. A helical membrane pass occupies residues 834 to 855 (VSAVEVIAILAASFGLLACIFF). Residues 856–1085 (NKVYIILFKP…STVTENMLRS (230 aa)) are Cytoplasmic-facing. The tract at residues 856–1085 (NKVYIILFKP…STVTENMLRS (230 aa)) is C-terminus. Positions 881–901 (AFKVAARATLRRSNVSRQRSS) are interaction with RNF19A. T889 carries the post-translational modification Phosphothreonine. Residues 891–899 (RRSNVSRQR) are arginine-rich retention motif. Phosphoserine occurs at positions 893, 900, and 921. A compositionally biased stretch (low complexity) spans 893 to 938 (SNVSRQRSSSLGGSTGSTPSSSISSKSNSEDPFPQQQPKRQKQPQP). Disordered stretches follow at residues 893–969 (SNVS…PPRC) and 1034–1058 (SQETGLQGPVGEDHQLEMEDPEEMS). Pro residues predominate over residues 950 to 960 (QPRPPSTPQPQ). S1068 carries the phosphoserine modification.

Belongs to the G-protein coupled receptor 3 family. Homodimer; disulfide-linked. Interacts with VCP. Interacts with ARRB1. Phosphorylation at Thr-889 by PKC impairs coupling with G(q)/G(11) G-proteins, while it does not affect G(i)/G(o)-coupling. Phosphorylation at Ser-893 by PKC and Ser-900 by PKA promote plasma membrane localization. Post-translationally, ubiquitinated by RNF19A; which induces proteasomal degradation.

The protein localises to the cell membrane. With respect to regulation, in resting state, adopts an open conformation, anion-binding promoting the inactive configuration. Upon aromatic amino acid-binding, the groove in the extracellular venus flytrap module is closed, thereby inducing the formation of a novel homodimer interface between subunits. Calcium ions stabilize the active state by enhancing homodimer interactions between membrane-proximal domains to fully activate the receptor. Upon activation, the homodimer adopts an asymmetric configuration of the 7-transmembrane region that primes one protomer for G-protein coupling. G-protein binding expands the transmembrane dimer interface; the restriction imposed by the receptor dimer, in combination with intracellular loop 2 (ICL2), enables G-protein activation by facilitating conformational transition of G-protein alpha. Coupling to different classes of G-proteins results in distinct CASR-G-protein interfaces. Functionally, G-protein-coupled receptor that senses changes in the extracellular concentration of calcium ions and plays a key role in maintaining calcium homeostasis. Senses fluctuations in the circulating calcium concentration: activated by elevated circulating calcium, leading to decreased parathyroid hormone (PTH) secretion in parathyroid glands. In kidneys, acts as a key regulator of renal tubular calcium resorption. Ligand binding causes a conformation change that triggers signaling via guanine nucleotide-binding proteins (G-proteins) and modulates the activity of downstream effectors. CASR is coupled with different G(q)/G(11), G(i)/G(o)- or G(s)-classes of G-proteins depending on the context. In the parathyroid and kidney, CASR signals through G(q)/G(11) and G(i)/G(o) G-proteins: G(q)/G(11) coupling activates phospholipase C-beta, releasing diacylglycerol (DAG) and inositol 1,4,5-trisphosphate (IP3) second messengers, while G(i)/G(o) coupling mediates inhibition of adenylate cyclase activity. The G-protein-coupled receptor activity is activated by a co-agonist mechanism: aromatic amino acids, such as Trp or Phe, act concertedly with divalent cations, such as calcium or magnesium, to achieve full receptor activation. Acts as an activator of the NLRP3 inflammasome via G(i)/G(o)-mediated signaling: down-regulation of cyclic AMP (cAMP) relieving NLRP3 inhibition by cAMP. Acts as a regulator of proton-sensing receptor GPR68 in a seesaw manner: CASR-mediated signaling inhibits GPR68 signaling in response to extracellular calcium, while GPR68 inhibits CASR in presence of extracellular protons. This Bos taurus (Bovine) protein is Extracellular calcium-sensing receptor (CASR).